We begin with the raw amino-acid sequence, 358 residues long: Protein RecA (358 aa).

Position 66-73 (66-73 (GPESSGKT)) interacts with ATP.

The protein belongs to the RecA family.

Its subcellular location is the cytoplasm. Functionally, can catalyze the hydrolysis of ATP in the presence of single-stranded DNA, the ATP-dependent uptake of single-stranded DNA by duplex DNA, and the ATP-dependent hybridization of homologous single-stranded DNAs. It interacts with LexA causing its activation and leading to its autocatalytic cleavage. In Herpetosiphon aurantiacus (strain ATCC 23779 / DSM 785 / 114-95), this protein is Protein RecA.